We begin with the raw amino-acid sequence, 316 residues long: Phosphatidylinositol mannoside acyltransferase (316 aa).

H137 (proton acceptor) is an active-site residue. Residues H137 and R175 each contribute to the hexadecanoyl-CoA site. Residue E211 is part of the active site. E240 provides a ligand contact to hexadecanoyl-CoA.

It belongs to the LpxL/LpxM/LpxP family.

It is found in the cell inner membrane. It carries out the reaction a 2,6-O-bis(alpha-D-mannopyranosyl)-1-phosphatidyl-1D-myo-inositol + an acyl-CoA = a 2-O-(alpha-D-mannosyl)-6-O-(6-O-acyl-alpha-D-mannosyl)-1-phosphatidyl-1D-myo-inositol + CoA. It catalyses the reaction a 1,2-diacyl-sn-glycero-3-phospho-[alpha-D-mannopyranosyl-(1&lt;-&gt;6)-D-myo-inositol] + an acyl-CoA = a 1,2-diacyl-sn-glycero-3-phospho-[alpha-D-6-acyl-mannopyranosyl-(1&lt;-&gt;6)-D-myo-inositol] + CoA. The protein operates within phospholipid metabolism; phosphatidylinositol metabolism. Its function is as follows. Catalyzes the transfer of a palmitoyl moiety from palmitoyl-CoA to the 6-position of the mannose ring linked to the 2-position of myo-inositol in phosphatidyl-myo-inositol monomannoside (PIM1) or dimannoside (PIM2). This is Phosphatidylinositol mannoside acyltransferase from Mycobacterium tuberculosis (strain CDC 1551 / Oshkosh).